We begin with the raw amino-acid sequence, 220 residues long: Deoxyribose-phosphate aldolase (220 aa).

The active-site Proton donor/acceptor is the D89. K151 serves as the catalytic Schiff-base intermediate with acetaldehyde. K180 acts as the Proton donor/acceptor in catalysis.

The protein belongs to the DeoC/FbaB aldolase family. DeoC type 1 subfamily.

The protein localises to the cytoplasm. The catalysed reaction is 2-deoxy-D-ribose 5-phosphate = D-glyceraldehyde 3-phosphate + acetaldehyde. It participates in carbohydrate degradation; 2-deoxy-D-ribose 1-phosphate degradation; D-glyceraldehyde 3-phosphate and acetaldehyde from 2-deoxy-alpha-D-ribose 1-phosphate: step 2/2. In terms of biological role, catalyzes a reversible aldol reaction between acetaldehyde and D-glyceraldehyde 3-phosphate to generate 2-deoxy-D-ribose 5-phosphate. This chain is Deoxyribose-phosphate aldolase, found in Streptococcus suis (strain 98HAH33).